We begin with the raw amino-acid sequence, 595 residues long: uncharacterized protein (595 aa).

Disordered stretches follow at residues 50–159 (VNPS…KTKK), 398–430 (TYPT…PPSL), and 450–595 (VTEG…SLDK). Positions 83–122 (SNKSSALKKSNKSSNKSSNKSSNKSSNKSSNKSSNKSSNK) are enriched in low complexity. Residues 123–132 (FPDKSDKSDS) show a composition bias toward basic and acidic residues. The span at 137–146 (DNSDDSDDSS) shows a compositional bias: acidic residues. A compositionally biased stretch (low complexity) spans 398-409 (TYPTTPLFSEPT). Positions 410 to 420 (IPKPPQQPTTE) are enriched in pro residues. Residues 421 to 430 (PPSGFKPPSL) are compositionally biased toward low complexity. The span at 454–463 (KVVESDDHTS) shows a compositional bias: basic and acidic residues. Pro residues predominate over residues 467–476 (IPPPPPPPPS). Residues 477–529 (ISSDNSSPNKSVKSSTKSSTKSSTKSSTKSSTKSSTKSPSKTPVKSPIKSSSK) are compositionally biased toward low complexity. Residues 530 to 542 (LSDKKSPTKKIES) show a composition bias toward basic and acidic residues. A compositionally biased stretch (acidic residues) spans 544-553 (GESDSESDSE). Basic residues predominate over residues 559–570 (TKKSTNKIKKIT). The segment covering 571-580 (NNKLENSNTK) has biased composition (low complexity). Over residues 581–595 (NNKKFSKKKTISLDK) the composition is skewed to basic residues.

This is an uncharacterized protein from Acanthamoeba polyphaga mimivirus (APMV).